Reading from the N-terminus, the 231-residue chain is Protein fmp52-2, mitochondrial (231 aa).

Residues 1–46 (MTMTTAAVFGCTGAVGSQILATLLAIDTFPSVKTISRRLPNVQSPK) constitute a mitochondrion transit peptide.

The protein belongs to the FMP52 family.

Its subcellular location is the mitochondrion outer membrane. The sequence is that of Protein fmp52-2, mitochondrial (fmp522) from Neosartorya fischeri (strain ATCC 1020 / DSM 3700 / CBS 544.65 / FGSC A1164 / JCM 1740 / NRRL 181 / WB 181) (Aspergillus fischerianus).